Consider the following 185-residue polypeptide: MRTHIDDSASGKNHHLPMLWFFDSSLRLCAIPLSVATMWITVTNKEDNSSYGMLKYNNLSALKYMVLVSALCACYALLAAACSLVRCFVSKAWIFFVSDQIVAYLAITSVAAVMEMYYLAYNGAKEDSWSEACSSYGSFCSKVKLALILHTITFCCFFVIAVISAFRAFSVFDPPFVNSQEVQGD.

Over 1–15 the chain is Cytoplasmic; sequence MRTHIDDSASGKNHH. The chain crosses the membrane as a helical span at residues 16–36; that stretch reads LPMLWFFDSSLRLCAIPLSVA. The Extracellular segment spans residues 37-64; it reads TMWITVTNKEDNSSYGMLKYNNLSALKY. Asparagine 48 and asparagine 58 each carry an N-linked (GlcNAc...) asparagine glycan. Residues 65–85 form a helical membrane-spanning segment; that stretch reads MVLVSALCACYALLAAACSLV. The Cytoplasmic segment spans residues 86 to 92; sequence RCFVSKA. A helical membrane pass occupies residues 93–113; sequence WIFFVSDQIVAYLAITSVAAV. At 114-145 the chain is on the extracellular side; the sequence is MEMYYLAYNGAKEDSWSEACSSYGSFCSKVKL. Residues 146-166 form a helical membrane-spanning segment; the sequence is ALILHTITFCCFFVIAVISAF. At 167-185 the chain is on the cytoplasmic side; the sequence is RAFSVFDPPFVNSQEVQGD.

The protein belongs to the Casparian strip membrane proteins (CASP) family. As to quaternary structure, homodimer and heterodimers.

The protein resides in the cell membrane. The polypeptide is CASP-like protein 2D1 (Glycine max (Soybean)).